Here is a 256-residue protein sequence, read N- to C-terminus: DNA repair protein RecO (256 aa).

This sequence belongs to the RecO family.

Involved in DNA repair and RecF pathway recombination. In Shouchella clausii (strain KSM-K16) (Alkalihalobacillus clausii), this protein is DNA repair protein RecO.